Consider the following 135-residue polypeptide: Small ribosomal subunit protein bS6 (135 aa).

K93 is modified (N6-acetyllysine). The segment at 98 to 135 (EASPMVKAKDERRERRDDFANETADDAEAGDSEEEEEE) is disordered. The segment covering 104-116 (KAKDERRERRDDF) has biased composition (basic and acidic residues). Residues 120–135 (TADDAEAGDSEEEEEE) are compositionally biased toward acidic residues.

Belongs to the bacterial ribosomal protein bS6 family. As to quaternary structure, part of the 30S ribosomal subunit. Interacts weakly with uL2 in one of the 3.5 A resolved structures. Post-translationally, 5 different forms of the protein, varying only in the number of C-terminal glutamate residues, were isolated. The sequence shown is form bS6-6, which is the longest. The first two Glu are encoded by the rpsF gene, the other Glu are added post-translationally by the RimK enzyme.

Its function is as follows. Binds together with bS18 to 16S ribosomal RNA. This is Small ribosomal subunit protein bS6 (rpsF) from Escherichia coli (strain K12).